The chain runs to 523 residues: Cytochrome P450 monooxygenase bsc5 (523 aa).

A helical membrane pass occupies residues 16-36; sequence MQLHWTVLGLLPVLFIAILGP. N-linked (GlcNAc...) asparagine glycans are attached at residues N178, N281, and N403. C459 is a binding site for heme.

The protein belongs to the cytochrome P450 family. It depends on heme as a cofactor.

Its subcellular location is the membrane. It participates in mycotoxin biosynthesis. Cytochrome P450 monooxygenase; part of the gene cluster that mediates the biosynthesis of the diterpene glucoside brassicicene C. In the first step of the brassicicene C biosynthesis, the bifunctional diterpene synthase bsc8 that possesses both prenyl transferase and terpene cyclase activity, converts isopentenyl diphosphate and dimethylallyl diphosphate into geranylgeranyl diphosphate (GGDP) that is further converted into fusicocca-2,10(14)-diene, the first precursor for brassicicene C. Fusicocca-2,10(14)-diene is then substrate of cytochrome P450 monooxygenase bsc1 for hydroxylation at the C-8 position. Oxidation at C-16 position to aldehyde is then catalyzed by the cytochrome P450 monooyxygenase bsc7, yielding fusicocca-2,10(14)-diene-8-beta,16-diol. Follows the isomerization of the double bond and reduction of aldehyde to alcohol catalyzed by the short-chain dehydrogenase/reductase bsc3 to yield the diol compound fusicocca-1,10(14)-diene-8 beta,16-diol. The next step is the oxidation at the C-3 position of fusicocca-2,10(14)-diene-8-beta,16-diol catalyzed by the alpha-ketoglutarate dependent dioxygenase bsc9, to produce a triol compound. Methylation of the hydroxy group at position 16 is performed by the methyltransferase bsc6. 16-O-methylation is followed by oxidation at the C-13 position to ketone and an alkyl shift of the methyl group leads to brassicicene C. Although the probable acetyltransferase bsc4 is included in the gene cluster, no acetylation reactions are necessary for brassicicene C biosynthesis. However, the fact that brassicicene E, which is a structurally related compound having an acetoxy group at position 12, was previously isolated from another strain of A.brassicicola suggests that the ATCC 96836 strain might also produce a small amount of brassicicene E. In Alternaria brassicicola (Dark leaf spot agent), this protein is Cytochrome P450 monooxygenase bsc5.